Reading from the N-terminus, the 302-residue chain is Meiotic recombination protein rec14 (302 aa).

7 WD repeats span residues A14 to V51, P57 to L96, Q101 to E140, D142 to S184, G185 to R226, G227 to T266, and E269 to E302.

Component of the DSB catalytic core (DSBC) complex, composed of at least rec12, rec6 and rec14. The complex interacts with mde2.

Required for formation of the rec12-mediated double-strand breaks (DSBs) that initiate meiotic recombination. The polypeptide is Meiotic recombination protein rec14 (Schizosaccharomyces pombe (strain 972 / ATCC 24843) (Fission yeast)).